The following is an 862-amino-acid chain: Eukaryotic translation initiation factor 3 subunit C (862 aa).

Gly residues predominate over residues 1 to 10 (MSRFFYGGGS). Positions 1–81 (MSRFFYGGGS…DEEKTTVVKS (81 aa)) are disordered. The span at 16-52 (SSDEEELYERDEEEQSEEEESSEEEETSEEGSDDEEG) shows a compositional bias: acidic residues. Positions 601-775 (FHMHINLELL…GAIVFRKGVE (175 aa)) constitute a PCI domain. Residues 814 to 862 (RDQGAGARGGRGGGRGGHARGGARFPGQQGRRPGGQQFGGGALGGAIKA) form a disordered region. Gly residues predominate over residues 819-833 (GARGGRGGGRGGHAR). Over residues 835–844 (GARFPGQQGR) the composition is skewed to low complexity. Gly residues predominate over residues 845–862 (RPGGQQFGGGALGGAIKA).

It belongs to the eIF-3 subunit C family. In terms of assembly, component of the eukaryotic translation initiation factor 3 (eIF-3) complex.

The protein localises to the cytoplasm. Its function is as follows. Component of the eukaryotic translation initiation factor 3 (eIF-3) complex, which is involved in protein synthesis of a specialized repertoire of mRNAs and, together with other initiation factors, stimulates binding of mRNA and methionyl-tRNAi to the 40S ribosome. The eIF-3 complex specifically targets and initiates translation of a subset of mRNAs involved in cell proliferation. In Aspergillus clavatus (strain ATCC 1007 / CBS 513.65 / DSM 816 / NCTC 3887 / NRRL 1 / QM 1276 / 107), this protein is Eukaryotic translation initiation factor 3 subunit C (nip1).